The following is a 304-amino-acid chain: Sulfate adenylyltransferase subunit 2 (304 aa).

The protein belongs to the PAPS reductase family. CysD subfamily. In terms of assembly, heterodimer composed of CysD, the smaller subunit, and CysN.

The catalysed reaction is sulfate + ATP + H(+) = adenosine 5'-phosphosulfate + diphosphate. It participates in sulfur metabolism; hydrogen sulfide biosynthesis; sulfite from sulfate: step 1/3. In terms of biological role, with CysN forms the ATP sulfurylase (ATPS) that catalyzes the adenylation of sulfate producing adenosine 5'-phosphosulfate (APS) and diphosphate, the first enzymatic step in sulfur assimilation pathway. APS synthesis involves the formation of a high-energy phosphoric-sulfuric acid anhydride bond driven by GTP hydrolysis by CysN coupled to ATP hydrolysis by CysD. In Acinetobacter baumannii (strain SDF), this protein is Sulfate adenylyltransferase subunit 2.